We begin with the raw amino-acid sequence, 1255 residues long: Structural polyprotein (1255 aa).

The necessary for nucleocapsid assembly and virus assembly stretch occupies residues 1–33; it reads MFPFQPMYPMQPMPYRNPFAAPRRPWFPRTDPF. Residues 33–68 are host transcription inhibition; sequence FLAMQVQELTRSMANLTFKQRREAPPEGPPAKKPKR. The short motif at 41 to 48 is the Supraphysiological nuclear export signal element; that stretch reads LTRSMANL. Positions 44-119 are disordered; it reads SMANLTFKQR…KKPGKRQRMV (76 aa). An N-linked (GlcNAc...) asparagine; by host glycan is attached at N47. A Nuclear localization signal motif is present at residues 64–68; it reads KKPKR. The span at 80–92 shows a compositional bias: basic residues; it reads GKKKKNQGKKKAK. Residues 91–127 are binding to the viral RNA; the sequence is AKTGPPNPKAQNGNKKKTNKKPGKRQRMVMKLESDKT. Phosphothreonine occurs at positions 93 and 108. Residues 104–118 show a composition bias toward basic residues; it reads NKKKTNKKPGKRQRM. Residues 112–126 form a ribosome-binding region; it reads PGKRQRMVMKLESDK. S124 bears the Phosphoserine mark. One can recognise a Peptidase S3 domain in the interval 126–275; it reads KTFPIMLEGK…KYTPENCEQW (150 aa). Position 127 is a phosphothreonine (T127). H152 (charge relay system) is an active-site residue. Residues 168 to 173 form an interaction with spike glycoprotein E2 region; that stretch reads KKASKY. Active-site charge relay system residues include D174 and S226. Residues 260–264 form an interaction with spike glycoprotein E2 region; it reads EKGVT. Residues 276 to 287 are functions as an uncleaved signal peptide for the precursor of protein E3/E2; that stretch reads SLVTTMCLLANV. Residues 276–701 lie on the Extracellular side of the membrane; that stretch reads SLVTTMCLLA…HYYHRYPMST (426 aa). 7 cysteine pairs are disulfide-bonded: C282–C291, C353–C457, C356–C361, C424–C438, C485–C600, C534–C560, and C536–C554. N-linked (GlcNAc...) asparagine; by host glycosylation occurs at N286. A glycan (N-linked (GlcNAc...) asparagine; by host) is linked at N652. A helical membrane pass occupies residues 702 to 722; sequence ILGLSICAAIVTVSIAASTWL. Over 723-757 the chain is Cytoplasmic; that stretch reads LCKSRVSCLTPYRLTPNARMPLCLAVLCCARTARA. The interval 725 to 729 is interaction with the capsid protein; that stretch reads KSRVS. S-palmitoyl cysteine; by host attachment occurs at residues C730, C750, and C751. The interval 730–750 is transient transmembrane before p62-6K protein processing; the sequence is CLTPYRLTPNARMPLCLAVLC. An intrachain disulfide couples C730 to C751. At 758–772 the chain is on the extracellular side; the sequence is ETTWESLDHLWNNNQ. Residues 773 to 793 traverse the membrane as a helical segment; it reads QMFWIQLLIPLAALIVVTRLL. R794 is a topological domain (cytoplasmic). A helical transmembrane segment spans residues 795–815; sequence CVCCVVPFLVVAGAAGAGAYE. Residues 816–1225 are Extracellular-facing; that stretch reads HATTMPSQAG…SKTAWTWLTS (410 aa). Disulfide bonds link C862–C927, C875–C907, C876–C909, and C881–C891. Positions 897-914 are E1 fusion peptide loop; that stretch reads VYPFMWGGAYCFCDTENT. Residues N947 and N1083 are each glycosylated (N-linked (GlcNAc...) asparagine; by host). Cystine bridges form between C1072–C1084, C1114–C1189, C1119–C1193, and C1141–C1183. Residues 1226–1246 traverse the membrane as a helical segment; the sequence is LLGGSAVIIIIGLVLATIVAM. Residues 1247-1255 are Cytoplasmic-facing; sequence YVLTNQKHN.

In terms of assembly, homodimer. Homomultimer. Interacts with host karyopherin KPNA4; this interaction allows the nuclear import of the viral capsid protein. Interacts with spike glycoprotein E2. Interacts with host IRAK1; the interaction leads to inhibition of IRAK1-dependent signaling. Part of a tetrameric complex composed of host CRM1, host importin alpha/beta dimer and the viral capsid; this complex blocks the receptor-mediated transport through the nuclear pore. Interacts with host phosphatase PPP1CA; this interaction dephosphorylates the capsid protein, which increases its ability to bind to the viral genome. As to quaternary structure, the precursor of protein E3/E2 and E1 form a heterodimer shortly after synthesis. Interacts with spike glycoprotein E2. The precursor of protein E3/E2 and E1 form a heterodimer shortly after synthesis. Processing of the precursor of protein E3/E2 into E2 and E3 results in a heterodimer of the spike glycoproteins E2 and E1. Spike at virion surface are constituted of three E2-E1 heterodimers. After target cell attachment and endocytosis, E1 change conformation to form homotrimers. Interacts with 6K protein. Interacts with host LDLRAD3; this interaction mediates viral entry to the host cell. In terms of assembly, interacts with spike glycoprotein E1. Processing of the precursor of protein E3/E2 into E2 and E3 results in a heterodimer of the spike glycoproteins E2 and E1. Spike at virion surface are constituted of a trimer of E2-E1 heterodimers. Interacts with 6K protein. Interacts with host LDLRAD3; this interaction mediates viral entry to the host cell. As to quaternary structure, oligomer. Interacts with spike glycoprotein E1. Interacts with spike glycoprotein E2. Structural polyprotein: Specific enzymatic cleavages in vivo yield mature proteins. Capsid protein is auto-cleaved during polyprotein translation, unmasking a signal peptide at the N-terminus of the precursor of E3/E2. The remaining polyprotein is then targeted to the host endoplasmic reticulum, where host signal peptidase cleaves it into pE2, 6K and E1 proteins. pE2 is further processed to mature E3 and E2 by host furin in trans-Golgi vesicle. In terms of processing, phosphorylated on serine and threonine residues. Post-translationally, palmitoylated via thioester bonds. These palmitoylations may induce disruption of the C-terminus transmembrane. This would result in the reorientation of E2 C-terminus from lumenal to cytoplasmic side. N-glycosylated. In terms of processing, palmitoylated via thioester bonds.

It is found in the virion. The protein resides in the host cytoplasm. The protein localises to the host cell membrane. It localises to the host nucleus. Its subcellular location is the virion membrane. It is found in the host Golgi apparatus. The protein resides in the host trans-Golgi network. The protein localises to the host endoplasmic reticulum. It catalyses the reaction Autocatalytic release of the core protein from the N-terminus of the togavirus structural polyprotein by hydrolysis of a -Trp-|-Ser- bond.. Forms an icosahedral capsid with a T=4 symmetry composed of 240 copies of the capsid protein surrounded by a lipid membrane through which penetrate 80 spikes composed of trimers of E1-E2 heterodimers. The capsid protein binds to the viral RNA genome at a site adjacent to a ribosome binding site for viral genome translation following genome release. Possesses a protease activity that results in its autocatalytic cleavage from the nascent structural protein. Following its self-cleavage, the capsid protein transiently associates with ribosomes, and within several minutes the protein binds to viral RNA and rapidly assembles into icosahedric core particles. The resulting nucleocapsid eventually associates with the cytoplasmic domain of the spike glycoprotein E2 at the cell membrane, leading to budding and formation of mature virions. In case of infection, new virions attach to target cells and after clathrin-mediated endocytosis their membrane fuses with the host endosomal membrane. This leads to the release of the nucleocapsid into the cytoplasm, followed by an uncoating event necessary for the genomic RNA to become accessible. The uncoating might be triggered by the interaction of capsid proteins with ribosomes. Binding of ribosomes would release the genomic RNA since the same region is genomic RNA-binding and ribosome-binding. Specifically inhibits interleukin-1 receptor-associated kinase 1/IRAK1-dependent signaling during viral entry, representing a means by which the alphaviruses may evade innate immune detection and activation prior to viral gene expression. Inhibits host transcription. Forms a tetrameric complex with XPO1/CRM1 and the nuclear import receptor importin. This complex blocks the central channel of host nuclear pores thereby inhibiting the receptor-mediated nuclear transport and thus the host mRNA and rRNA transcription. The inhibition of transcription is linked to a cytopathic effect on the host cell. In terms of biological role, provides the signal sequence for the translocation of the precursor of protein E3/E2 to the host endoplasmic reticulum. Furin-cleaved E3 remains associated with spike glycoprotein E1 and mediates pH protection of the latter during the transport via the secretory pathway. After virion release from the host cell, the assembly protein E3 is gradually released in the extracellular space. Its function is as follows. Plays a role in viral attachment to target host cell, by binding to the cell receptor LDLRAD3. Synthesized as a p62 precursor which is processed by furin at the cell membrane just before virion budding, giving rise to E2-E1 heterodimer. The p62-E1 heterodimer is stable, whereas E2-E1 is unstable and dissociate at low pH. p62 is processed at the last step, presumably to avoid E1 fusion activation before its final export to cell surface. E2 C-terminus contains a transitory transmembrane that would be disrupted by palmitoylation, resulting in reorientation of the C-terminal tail from lumenal to cytoplasmic side. This step is critical since E2 C-terminus is involved in budding by interacting with capsid proteins. This release of E2 C-terminus in cytoplasm occurs lately in protein export, and precludes premature assembly of particles at the endoplasmic reticulum membrane. Functionally, acts as a viroporin that participates in virus glycoprotein processing and transport to the plasma membrane, cell permeabilization and budding of viral particles. Disrupts the calcium homeostasis of the cell, probably at the endoplasmic reticulum level. This leads to cytoplasmic calcium elevation. Because of its lipophilic properties, the 6K protein is postulated to influence the selection of lipids that interact with the transmembrane domains of the glycoproteins, which, in turn, affects the deformability of the bilayer required for the extreme curvature that occurs as budding proceeds. Present in low amount in virions, about 3% compared to viral glycoproteins. Class II viral fusion protein. Fusion activity is inactive as long as E1 is bound to E2 in mature virion. After virus attachment to cell receptor LDLRAD3 and endocytosis, acidification of the endosome induce dissociation of E1/E2 heterodimer and concomitant trimerization of the E1 subunits. This E1 trimer is fusion active, and promotes release of viral nucleocapsid in cytoplasm after endosome and viral membrane fusion. Efficient fusion requires the presence of cholesterol and sphingolipid in the target membrane. This chain is Structural polyprotein, found in Venezuelan equine encephalitis virus (strain 3880) (VEEV).